The chain runs to 500 residues: Glutelin type-B 4 (500 aa).

Positions 1–24 (MATIAFSRLSIYFCVLLLCHGSMA) are cleaved as a signal peptide. 2 cysteine pairs are disulfide-bonded: Cys45-Cys78 and Cys121-Cys310. 2 consecutive Cupin type-1 domains span residues 50–245 (LQAF…LVAK) and 316–465 (LNIE…EQAR). Residues 481–493 (RYQQQTYPGFSNE) show a composition bias toward polar residues. A disordered region spans residues 481–500 (RYQQQTYPGFSNESENEALE).

The protein belongs to the 11S seed storage protein (globulins) family. In terms of assembly, hexamer; each subunit is composed of an acidic and a basic chain derived from a single precursor and linked by a disulfide bond. Expressed in endosperm (at protein level).

Its function is as follows. Seed storage protein. This Oryza sativa subsp. japonica (Rice) protein is Glutelin type-B 4 (GLUB4).